A 236-amino-acid chain; its full sequence is 7-cyano-7-deazaguanine synthase (236 aa).

7-17 (CSGGLDSVTLA) lines the ATP pocket. Zn(2+) is bound by residues cysteine 185, cysteine 193, cysteine 196, and cysteine 199.

This sequence belongs to the QueC family. Requires Zn(2+) as cofactor.

The enzyme catalyses 7-carboxy-7-deazaguanine + NH4(+) + ATP = 7-cyano-7-deazaguanine + ADP + phosphate + H2O + H(+). Its pathway is purine metabolism; 7-cyano-7-deazaguanine biosynthesis. Functionally, catalyzes the ATP-dependent conversion of 7-carboxy-7-deazaguanine (CDG) to 7-cyano-7-deazaguanine (preQ(0)). This is 7-cyano-7-deazaguanine synthase from Rhizobium johnstonii (strain DSM 114642 / LMG 32736 / 3841) (Rhizobium leguminosarum bv. viciae).